The chain runs to 1027 residues: Pro-apoptotic serine protease nma111 (1027 aa).

Positions 1-46 are disordered; that stretch reads MDLNGDAGAKRKRSSIVPAERPAKHLKPESSALTPGDSTPANGTVY. The span at 31–42 shows a compositional bias: polar residues; the sequence is SALTPGDSTPAN. Residues 81 to 265 are serine protease; that stretch reads VVSIHFCQTC…AATDYFLPLD (185 aa). Catalysis depends on charge relay system residues H119, D150, and S232. 2 PDZ domains span residues 288 to 373 and 875 to 956; these read QWIL…LLVQ and VFCG…VTFD. The interval 991 to 1027 is disordered; it reads HNKSKHKDGIAPDAANLNPDAMEQGYDGASDIEPEAE.

The protein belongs to the peptidase S1C family.

The protein resides in the nucleus. Its function is as follows. Nuclear serine protease which mediates apoptosis. The chain is Pro-apoptotic serine protease nma111 (nma111) from Aspergillus oryzae (strain ATCC 42149 / RIB 40) (Yellow koji mold).